A 200-amino-acid polypeptide reads, in one-letter code: Ribonuclease HII (200 aa).

Positions 1–200 (MRYGGVDEAG…EINKKLTDFI (200 aa)) constitute an RNase H type-2 domain. A divalent metal cation is bound by residues D7, E8, and D99.

The protein belongs to the RNase HII family. It depends on Mn(2+) as a cofactor. The cofactor is Mg(2+).

The protein localises to the cytoplasm. The catalysed reaction is Endonucleolytic cleavage to 5'-phosphomonoester.. In terms of biological role, endonuclease that specifically degrades the RNA of RNA-DNA hybrids. The polypeptide is Ribonuclease HII (Nanoarchaeum equitans (strain Kin4-M)).